Consider the following 348-residue polypeptide: Phosphate acyltransferase (348 aa).

Belongs to the PlsX family. Homodimer. Probably interacts with PlsY.

The protein resides in the cytoplasm. The catalysed reaction is a fatty acyl-[ACP] + phosphate = an acyl phosphate + holo-[ACP]. The protein operates within lipid metabolism; phospholipid metabolism. Its function is as follows. Catalyzes the reversible formation of acyl-phosphate (acyl-PO(4)) from acyl-[acyl-carrier-protein] (acyl-ACP). This enzyme utilizes acyl-ACP as fatty acyl donor, but not acyl-CoA. The polypeptide is Phosphate acyltransferase (Lactiplantibacillus plantarum (strain ATCC BAA-793 / NCIMB 8826 / WCFS1) (Lactobacillus plantarum)).